Reading from the N-terminus, the 206-residue chain is Small ribosomal subunit protein uS4 (206 aa).

Residues 96-156 enclose the S4 RNA-binding domain; it reads CRLDNVVYRM…EKAKNQLRIA (61 aa).

It belongs to the universal ribosomal protein uS4 family. As to quaternary structure, part of the 30S ribosomal subunit. Contacts protein S5. The interaction surface between S4 and S5 is involved in control of translational fidelity.

One of the primary rRNA binding proteins, it binds directly to 16S rRNA where it nucleates assembly of the body of the 30S subunit. Its function is as follows. With S5 and S12 plays an important role in translational accuracy. The sequence is that of Small ribosomal subunit protein uS4 from Azotobacter vinelandii (strain DJ / ATCC BAA-1303).